The chain runs to 103 residues: Pyrimidine/purine nucleoside phosphorylase (103 aa).

The protein belongs to the nucleoside phosphorylase PpnP family.

The catalysed reaction is a purine D-ribonucleoside + phosphate = a purine nucleobase + alpha-D-ribose 1-phosphate. The enzyme catalyses adenosine + phosphate = alpha-D-ribose 1-phosphate + adenine. It catalyses the reaction cytidine + phosphate = cytosine + alpha-D-ribose 1-phosphate. It carries out the reaction guanosine + phosphate = alpha-D-ribose 1-phosphate + guanine. The catalysed reaction is inosine + phosphate = alpha-D-ribose 1-phosphate + hypoxanthine. The enzyme catalyses thymidine + phosphate = 2-deoxy-alpha-D-ribose 1-phosphate + thymine. It catalyses the reaction uridine + phosphate = alpha-D-ribose 1-phosphate + uracil. It carries out the reaction xanthosine + phosphate = alpha-D-ribose 1-phosphate + xanthine. Functionally, catalyzes the phosphorolysis of diverse nucleosides, yielding D-ribose 1-phosphate and the respective free bases. Can use uridine, adenosine, guanosine, cytidine, thymidine, inosine and xanthosine as substrates. Also catalyzes the reverse reactions. This is Pyrimidine/purine nucleoside phosphorylase from Shewanella oneidensis (strain ATCC 700550 / JCM 31522 / CIP 106686 / LMG 19005 / NCIMB 14063 / MR-1).